A 113-amino-acid polypeptide reads, in one-letter code: Large ribosomal subunit protein bL17 (113 aa).

The protein belongs to the bacterial ribosomal protein bL17 family. In terms of assembly, part of the 50S ribosomal subunit. Contacts protein L32.

In Clostridioides difficile (strain 630) (Peptoclostridium difficile), this protein is Large ribosomal subunit protein bL17.